Consider the following 348-residue polypeptide: Fructose-1,6-bisphosphatase class 1 (348 aa).

Glutamate 92, aspartate 111, leucine 113, and aspartate 114 together coordinate Mg(2+). Substrate contacts are provided by residues 114–117 and asparagine 204; that span reads DGSS. Glutamate 276 is a binding site for Mg(2+).

It belongs to the FBPase class 1 family. In terms of assembly, homotetramer. Requires Mg(2+) as cofactor.

The protein localises to the cytoplasm. The catalysed reaction is beta-D-fructose 1,6-bisphosphate + H2O = beta-D-fructose 6-phosphate + phosphate. The protein operates within carbohydrate biosynthesis; gluconeogenesis. This chain is Fructose-1,6-bisphosphatase class 1, found in Methylorubrum extorquens (strain CM4 / NCIMB 13688) (Methylobacterium extorquens).